Consider the following 218-residue polypeptide: Adenylate kinase (218 aa).

ATP is bound at residue 10-15 (GAGKGT). Residues 30-59 (STGDMLRAAVKEETPLGRKAKEVMDSGNLV) form an NMP region. AMP contacts are provided by residues threonine 31, arginine 36, 57-59 (NLV), 85-88 (GFPR), and glutamine 92. Residues 122–159 (GRRVHPASGRTYHLTFNPPQQQGVDDETGEPLIQRVDD) are LID. ATP-binding positions include arginine 123 and 132–133 (TY). Arginine 156 and arginine 167 together coordinate AMP. ATP is bound at residue glycine 203.

The protein belongs to the adenylate kinase family. In terms of assembly, monomer.

It localises to the cytoplasm. It catalyses the reaction AMP + ATP = 2 ADP. It participates in purine metabolism; AMP biosynthesis via salvage pathway; AMP from ADP: step 1/1. In terms of biological role, catalyzes the reversible transfer of the terminal phosphate group between ATP and AMP. Plays an important role in cellular energy homeostasis and in adenine nucleotide metabolism. The sequence is that of Adenylate kinase from Chlorobium phaeovibrioides (strain DSM 265 / 1930) (Prosthecochloris vibrioformis (strain DSM 265)).